A 943-amino-acid polypeptide reads, in one-letter code: Netrin receptor UNC5B-a (943 aa).

An N-terminal signal peptide occupies residues 1–30 (MYLSRNPSGAALAAILVALILSCNFPSSTA). The Extracellular portion of the chain corresponds to 31-380 (GIEYSDVLPD…LESTGDVALY (350 aa)). In terms of domain architecture, Ig-like spans 51 to 148 (PHFLLEPEDA…AGTTKSKRSY (98 aa)). 9 disulfide bridges follow: cysteine 72-cysteine 133, cysteine 84-cysteine 131, cysteine 177-cysteine 228, cysteine 261-cysteine 298, cysteine 265-cysteine 302, cysteine 276-cysteine 288, cysteine 317-cysteine 351, cysteine 321-cysteine 356, and cysteine 329-cysteine 341. Positions 150–245 (RIAYLRKNFD…KRRSTTATVI (96 aa)) constitute an Ig-like C2-type domain. The N-linked (GlcNAc...) asparagine glycan is linked to asparagine 225. 2 TSP type-1 domains span residues 249–303 (NGGW…TMCP) and 305–357 (DGGW…GLCM). Asparagine 350 is a glycosylation site (N-linked (GlcNAc...) asparagine). The chain crosses the membrane as a helical span at residues 381–401 (AGLVVAIFIVIILLMAVGIVV). The Cytoplasmic portion of the chain corresponds to 402–943 (YRRNCREFDT…MLVMATDGDC (542 aa)). In terms of domain architecture, ZU5 spans 542-685 (NSVTGTFGSL…LGTYAFVGES (144 aa)). The segment at 688-836 (RSAIKRLQLA…LEENVKSFDP (149 aa)) is UPA domain. Residues 863–941 (KICNSLDAPN…EMMLVMATDG (79 aa)) form the Death domain.

Belongs to the unc-5 family. Interacts (via extracellular domain) with flrt3 (via extracellular domain). Interacts with rnd1. In terms of processing, phosphorylated on cytoplasmic tyrosine residues. In the developing visual system, it is expressed within the developing optic vesicles and later become restricted to the dorsal ciliary marginal zone, a site of retinoblast proliferation and differentiation.

It localises to the cell membrane. Functionally, plays a role in cell-cell adhesion during embryonic development. Receptor for netrin required for axon guidance. Mediates axon repulsion of neuronal growth cones in the developing nervous system upon ligand binding. In Xenopus laevis (African clawed frog), this protein is Netrin receptor UNC5B-a (unc5b-a).